An 82-amino-acid chain; its full sequence is Beta-insect depressant toxin LqqIT2 (82 aa).

Positions 1-21 (MKLLLLLIVSASMLIESLVNA) are cleaved as a signal peptide. Positions 22–82 (DGYIRKRDGC…TWKSETNTCG (61 aa)) constitute an LCN-type CS-alpha/beta domain. 4 cysteine pairs are disulfide-bonded: Cys-31–Cys-81, Cys-35–Cys-56, Cys-42–Cys-63, and Cys-46–Cys-65.

It belongs to the long (4 C-C) scorpion toxin superfamily. Sodium channel inhibitor family. Beta subfamily. In terms of tissue distribution, expressed by the venom gland.

It is found in the secreted. Functionally, depressant insect beta-toxins cause a transient contraction paralysis followed by a slow flaccid paralysis. They bind voltage-independently at site-4 of sodium channels and shift the voltage of activation toward more negative potentials thereby affecting sodium channel activation and promoting spontaneous and repetitive firing. Aside from typical beta-toxin effects, this toxin also affects the inactivation process and ion selectivity of the insect voltage-gated sodium channel. This toxin is active only on insects. Is active on the insect voltage-gated sodium channel para. In vivo, when injected intraperitoneally, it exhibits analgesic activity, increasing hot plate and tail flick withdrawal latencies in a dose-dependent fashion. This phenomenon might be partly due to an inhibitory mechanism activated by noxious stimuli. This chain is Beta-insect depressant toxin LqqIT2, found in Leiurus quinquestriatus quinquestriatus (Egyptian scorpion).